The following is a 316-amino-acid chain: MRANNQIHNALYLAFARQQWAELRKSVPLTLSESDLDDLRGINESISLDEVTDIYLPLSRLLNLIVGAKQQRGLVLNQFLGRVPPKRPYIISIAGSVAVGKSTTARILQALLRQWPEHPKVDLVTTDGFLYPLSELKRRGLLQRKGFPESYDMKLLVEFISKIKAGESLVHAPIYSHISYDRVADTQQAIEQPDILIIEGLNVLQTGQDTHVAIQQPFVSDFVDFSIYVDAEEPLLKEWYISRFLKFRTGAFSDPNSYFHHYSELTDDEATKIAANIWDSINGPNLNLNILPTRDRAHLILRKGTDHMMHQVLMRK.

An ATP-binding site is contributed by 95–102 (GSVAVGKS).

This sequence belongs to the prokaryotic pantothenate kinase family.

It localises to the cytoplasm. The catalysed reaction is (R)-pantothenate + ATP = (R)-4'-phosphopantothenate + ADP + H(+). It functions in the pathway cofactor biosynthesis; coenzyme A biosynthesis; CoA from (R)-pantothenate: step 1/5. This Shewanella loihica (strain ATCC BAA-1088 / PV-4) protein is Pantothenate kinase.